Reading from the N-terminus, the 139-residue chain is Aspartate 1-decarboxylase (139 aa).

Catalysis depends on serine 25, which acts as the Schiff-base intermediate with substrate; via pyruvic acid. A Pyruvic acid (Ser) modification is found at serine 25. Threonine 57 is a substrate binding site. The Proton donor role is filled by tyrosine 58. 73–75 contributes to the substrate binding site; the sequence is GAA. A disordered region spans residues 117-139; that stretch reads LGADPAEPVPGSDQARSPQAVTA. The segment covering 130-139 has biased composition (polar residues); that stretch reads QARSPQAVTA.

This sequence belongs to the PanD family. Heterooctamer of four alpha and four beta subunits. Requires pyruvate as cofactor. Is synthesized initially as an inactive proenzyme, which is activated by self-cleavage at a specific serine bond to produce a beta-subunit with a hydroxyl group at its C-terminus and an alpha-subunit with a pyruvoyl group at its N-terminus.

Its subcellular location is the cytoplasm. The catalysed reaction is L-aspartate + H(+) = beta-alanine + CO2. The protein operates within cofactor biosynthesis; (R)-pantothenate biosynthesis; beta-alanine from L-aspartate: step 1/1. Catalyzes the pyruvoyl-dependent decarboxylation of aspartate to produce beta-alanine. The sequence is that of Aspartate 1-decarboxylase from Streptomyces avermitilis (strain ATCC 31267 / DSM 46492 / JCM 5070 / NBRC 14893 / NCIMB 12804 / NRRL 8165 / MA-4680).